Consider the following 1011-residue polypeptide: Translation initiation factor IF-2 (1011 aa).

Over residues 49 to 77 (YIHEHGTEESPRRRSAGEDEFKPKIDLSK) the composition is skewed to basic and acidic residues. Disordered regions lie at residues 49 to 152 (YIHE…RFIT) and 187 to 407 (AAPA…LSLS). The segment covering 93–104 (APPPPPPPPPRP) has biased composition (pro residues). Positions 105–115 (AVKAPSPVSQE) are enriched in low complexity. Over residues 116–126 (PRPPAVPPAPQ) the composition is skewed to pro residues. Low complexity-rich tracts occupy residues 187–212 (AAPAEEPKAAAPATTAPEAPEVKAPV) and 228–242 (TAKPEAPAAPGAATP). Pro residues-rich tracts occupy residues 243–252 (APTPGRPLPG) and 276–290 (SAPPPAPPRPTPPPQ). A compositionally biased stretch (gly residues) spans 316–329 (GPGGGSGGPGGFQR). A compositionally biased stretch (low complexity) spans 361-380 (LAPPGAPANKPAGRPAPARR). The region spanning 502-678 (VRPPVVTIMG…CLVADLGDLK (177 aa)) is the tr-type G domain. The tract at residues 511-518 (GHVDHGKT) is G1. 511 to 518 (GHVDHGKT) contributes to the GTP binding site. The interval 536 to 540 (GITQH) is G2. The segment at 564–567 (DTPG) is G3. GTP contacts are provided by residues 564 to 568 (DTPGH) and 618 to 621 (NKID). The tract at residues 618–621 (NKID) is G4. A G5 region spans residues 654-656 (SAK).

It belongs to the TRAFAC class translation factor GTPase superfamily. Classic translation factor GTPase family. IF-2 subfamily.

The protein resides in the cytoplasm. One of the essential components for the initiation of protein synthesis. Protects formylmethionyl-tRNA from spontaneous hydrolysis and promotes its binding to the 30S ribosomal subunits. Also involved in the hydrolysis of GTP during the formation of the 70S ribosomal complex. The sequence is that of Translation initiation factor IF-2 from Koribacter versatilis (strain Ellin345).